A 166-amino-acid polypeptide reads, in one-letter code: uncharacterized protein (166 aa).

The helical transmembrane segment at 34 to 54 (FWGKVLVLTFGIICVVFVIFM) threads the bilayer. 2 disordered regions span residues 73-93 (QRTQHSIHRRERSSSGASQQF) and 123-166 (TSTP…NDEV).

Its subcellular location is the vacuole membrane. This is an uncharacterized protein from Schizosaccharomyces pombe (strain 972 / ATCC 24843) (Fission yeast).